Consider the following 620-residue polypeptide: Protein AFR1 (620 aa).

A compositionally biased stretch (polar residues) spans 1–12 (MEGSYLSAQENQ). A disordered region spans residues 1–20 (MEGSYLSAQENQPIPERLIP). Ser472 and Ser526 each carry phosphoserine.

It to yeast YER158C.

Acts in conjunction with the alpha-factor receptor to promote morphogenesis and adaptation. The chain is Protein AFR1 (AFR1) from Saccharomyces cerevisiae (strain ATCC 204508 / S288c) (Baker's yeast).